We begin with the raw amino-acid sequence, 731 residues long: 1,4-alpha-glucan branching enzyme GlgB (731 aa).

Catalysis depends on Asp-411, which acts as the Nucleophile. Catalysis depends on Glu-464, which acts as the Proton donor.

This sequence belongs to the glycosyl hydrolase 13 family. GlgB subfamily. In terms of assembly, monomer.

It carries out the reaction Transfers a segment of a (1-&gt;4)-alpha-D-glucan chain to a primary hydroxy group in a similar glucan chain.. The protein operates within glycan biosynthesis; glycogen biosynthesis. Functionally, catalyzes the formation of the alpha-1,6-glucosidic linkages in glycogen by scission of a 1,4-alpha-linked oligosaccharide from growing alpha-1,4-glucan chains and the subsequent attachment of the oligosaccharide to the alpha-1,6 position. The protein is 1,4-alpha-glucan branching enzyme GlgB of Mycobacterium ulcerans (strain Agy99).